Reading from the N-terminus, the 189-residue chain is Early E3 20.5 kDa glycoprotein (189 aa).

Residues asparagine 73 and asparagine 137 are each glycosylated (N-linked (GlcNAc...) asparagine; by host).

The protein belongs to the adenoviridae E3_20 family.

Its function is as follows. E3 proteins seem to be dispensable for virus growth in tissue culture cells. They are potentially important for virus growth under special conditions; E3 region may help adenoviruses to evade the immune surveillance of the host. This Homo sapiens (Human) protein is Early E3 20.5 kDa glycoprotein.